Reading from the N-terminus, the 87-residue chain is Cell division topological specificity factor (87 aa).

This sequence belongs to the MinE family.

Its function is as follows. Prevents the cell division inhibition by proteins MinC and MinD at internal division sites while permitting inhibition at polar sites. This ensures cell division at the proper site by restricting the formation of a division septum at the midpoint of the long axis of the cell. In Chelativorans sp. (strain BNC1), this protein is Cell division topological specificity factor.